Consider the following 297-residue polypeptide: Pyrroline-5-carboxylate reductase 1 (297 aa).

This sequence belongs to the pyrroline-5-carboxylate reductase family.

It localises to the cytoplasm. It carries out the reaction L-proline + NADP(+) = (S)-1-pyrroline-5-carboxylate + NADPH + 2 H(+). It catalyses the reaction L-proline + NAD(+) = (S)-1-pyrroline-5-carboxylate + NADH + 2 H(+). Its pathway is amino-acid biosynthesis; L-proline biosynthesis; L-proline from L-glutamate 5-semialdehyde: step 1/1. Catalyzes the reduction of 1-pyrroline-5-carboxylate (PCA) to L-proline. In Bacillus subtilis (strain 168), this protein is Pyrroline-5-carboxylate reductase 1 (proH).